The following is a 313-amino-acid chain: Interferon-inducible double-stranded RNA-dependent protein kinase activator A (313 aa).

The interval methionine 1 to threonine 20 is disordered. 3 sufficient for self-association and interaction with TARBP2 regions span residues methionine 1 to alanine 103, asparagine 102 to isoleucine 195, and isoleucine 195 to lysine 313. The residue at position 18 (serine 18) is a Phosphoserine. 3 consecutive DRBM domains span residues threonine 34 to alanine 101, asparagine 126 to asparagine 194, and aspartate 240 to isoleucine 308. Residues serine 167, serine 246, and serine 287 each carry the phosphoserine modification.

Belongs to the PRKRA family. Homodimer. Interacts with DICER1, AGO2 and TARBP2. Also able to interact with dsRNA. Interacts with EIF2AK2/PKR through its DRBM domains. Interacts with DUS2L (via DRBM domain). Interacts with UBC9. Forms a complex with UBC9 and p53/TP53. In terms of processing, phosphorylated at Ser-246 in unstressed cells and at Ser-287 in stressed cells. Phosphorylation at Ser-246 appears to be a prerequisite for subsequent phosphorylation at Ser-287. Phosphorylation at Ser-246 and Ser-287 are necessary for activation of EIF2AK2/PKR under conditions of stress. Expressed in brain, heart, kidney, liver, lung, muscle, spleen and testis.

It localises to the cytoplasm. The protein localises to the perinuclear region. Functionally, required for siRNA production by DICER1 and for subsequent siRNA-mediated post-transcriptional gene silencing. Does not seem to be required for processing of pre-miRNA to miRNA by DICER1. Activates EIF2AK2/PKR in the absence of double-stranded RNA (dsRNA), leading to phosphorylation of EIF2S1/EFI2-alpha and inhibition of translation and induction of apoptosis. Promotes UBC9-p53/TP53 association and sumoylation and phosphorylation of p53/TP53 at 'Lys-386' at 'Ser-392' respectively and enhances its activity in a EIF2AK2/PKR-dependent manner. The protein is Interferon-inducible double-stranded RNA-dependent protein kinase activator A (Prkra) of Mus musculus (Mouse).